The following is a 396-amino-acid chain: Lipid-A-disaccharide synthase (396 aa).

This sequence belongs to the LpxB family.

The enzyme catalyses a lipid X + a UDP-2-N,3-O-bis[(3R)-3-hydroxyacyl]-alpha-D-glucosamine = a lipid A disaccharide + UDP + H(+). It functions in the pathway bacterial outer membrane biogenesis; LPS lipid A biosynthesis. Condensation of UDP-2,3-diacylglucosamine and 2,3-diacylglucosamine-1-phosphate to form lipid A disaccharide, a precursor of lipid A, a phosphorylated glycolipid that anchors the lipopolysaccharide to the outer membrane of the cell. This chain is Lipid-A-disaccharide synthase, found in Nitrobacter hamburgensis (strain DSM 10229 / NCIMB 13809 / X14).